The primary structure comprises 119 residues: Holo-[acyl-carrier-protein] synthase (119 aa).

Asp-8 and Glu-58 together coordinate Mg(2+).

The protein belongs to the P-Pant transferase superfamily. AcpS family. Requires Mg(2+) as cofactor.

Its subcellular location is the cytoplasm. The enzyme catalyses apo-[ACP] + CoA = holo-[ACP] + adenosine 3',5'-bisphosphate + H(+). In terms of biological role, transfers the 4'-phosphopantetheine moiety from coenzyme A to a Ser of acyl-carrier-protein. The protein is Holo-[acyl-carrier-protein] synthase of Streptococcus thermophilus (strain CNRZ 1066).